A 195-amino-acid polypeptide reads, in one-letter code: Ureidoglycolate lyase (195 aa).

Belongs to the ureidoglycolate lyase family. Homodimer.

It catalyses the reaction (S)-ureidoglycolate = urea + glyoxylate. It participates in nitrogen metabolism; (S)-allantoin degradation. Catalyzes the catabolism of the allantoin degradation intermediate (S)-ureidoglycolate, generating urea and glyoxylate. Involved in the utilization of allantoin as secondary nitrogen source when primary sources are limiting. This chain is Ureidoglycolate lyase (DAL3), found in Saccharomyces cerevisiae (strain ATCC 204508 / S288c) (Baker's yeast).